A 541-amino-acid chain; its full sequence is DNA ligase 1 (541 aa).

Residue E234 coordinates ATP. K236 (N6-AMP-lysine intermediate) is an active-site residue. ATP is bound by residues R241, R256, E286, F325, R398, and K404.

It belongs to the ATP-dependent DNA ligase family. Requires Mg(2+) as cofactor.

The enzyme catalyses ATP + (deoxyribonucleotide)n-3'-hydroxyl + 5'-phospho-(deoxyribonucleotide)m = (deoxyribonucleotide)n+m + AMP + diphosphate.. In terms of biological role, DNA ligase that seals nicks in double-stranded DNA during DNA replication, DNA recombination and DNA repair. The sequence is that of DNA ligase 1 from Korarchaeum cryptofilum (strain OPF8).